A 981-amino-acid chain; its full sequence is Alpha-mannosidase (981 aa).

3 residues coordinate Zn(2+): histidine 23, aspartate 25, and aspartate 145. Residue aspartate 145 is the Nucleophile of the active site. Asparagine 312 carries N-linked (GlcNAc...) asparagine glycosylation. Zn(2+) is bound at residue histidine 386. 3 disulfides stabilise this stretch: cysteine 422–cysteine 432, cysteine 442–cysteine 450, and cysteine 800–cysteine 807. An N-linked (GlcNAc...) asparagine glycan is attached at asparagine 446. Residues 938–957 (KKMKWSVEGDNEQEPQAVRG) form a disordered region.

The protein belongs to the glycosyl hydrolase 38 family. As to quaternary structure, dimer of dimers of heavy and light subunits. Zn(2+) serves as cofactor. Post-translationally, produced as a precursor which is then proteolytically cleaved into a 66kD heavy subunit and a 44kD light subunit. Cleavage probably occurs in protein bodies/protein storage vacuoles.

The protein localises to the protein storage vacuole. It catalyses the reaction Hydrolysis of terminal, non-reducing alpha-D-mannose residues in alpha-D-mannosides.. Inhibited by 2,3,4,6-tetra-O-acetyl-5-fluoro-beta-L-gulopyranosyl fluoride which acts as a slow substrate, doubling as a competitive inhibitor as it forms a high steady state concentration of glycosyl-enzyme intermediate that blocks the active site. Inhibited by 2,3,4,6-tetra-O-acetyl-5-fluoro-alpha-D-mannopyranosyl fluoride which also acts as a slow substrate but no intermediates accumulate. Inhibited by EDTA. Inhibited by metal ion Cu(2+). Inhibited by metal ions Fe(2+), Cd(2+) and Co(2+). Inhibited by metal ions Ag(+) and Hg(2+). Competitively inhibited by mannono-1-4-lactone and mannono-1-5-lactone. Inhibited by swainsonine but not by 1-desoxymannojirimycin. Inhibited by pyrrolidine-3,4-diol derivatives. Liberates mannose from p-nitrophenyl-alpha-D-mannoside. Liberates mannose from further alpha-D-mannosides including methyl-, benzyl-alpha-D-mannoside, 1-6-linked di-, tri- and tetrasaccharides of alpha-D-mannose and mannosyl-rhamnose. Liberates mannose from various glycoproteins like ovalbumin and ovomucoid. Does not hydrolyze beta-D-mannosides. Has glycosyltransferase activity, forming disaccharides from mannose and lyxose but not from glucose, galactose, ribose, xylose or arabinose. The polypeptide is Alpha-mannosidase (Canavalia ensiformis (Jack bean)).